A 92-amino-acid polypeptide reads, in one-letter code: Small ribosomal subunit protein uS19 (92 aa).

Belongs to the universal ribosomal protein uS19 family.

In terms of biological role, protein S19 forms a complex with S13 that binds strongly to the 16S ribosomal RNA. The polypeptide is Small ribosomal subunit protein uS19 (Rickettsia akari (strain Hartford)).